The following is a 208-amino-acid chain: Uracil phosphoribosyltransferase (208 aa).

Residues R78, R103, and 130 to 138 contribute to the 5-phospho-alpha-D-ribose 1-diphosphate site; that span reads DPMFATGGT. Uracil contacts are provided by residues I193 and 198 to 200; that span reads GDA. D199 provides a ligand contact to 5-phospho-alpha-D-ribose 1-diphosphate.

This sequence belongs to the UPRTase family. Requires Mg(2+) as cofactor.

It carries out the reaction UMP + diphosphate = 5-phospho-alpha-D-ribose 1-diphosphate + uracil. The protein operates within pyrimidine metabolism; UMP biosynthesis via salvage pathway; UMP from uracil: step 1/1. With respect to regulation, allosterically activated by GTP. Functionally, catalyzes the conversion of uracil and 5-phospho-alpha-D-ribose 1-diphosphate (PRPP) to UMP and diphosphate. In Campylobacter jejuni subsp. jejuni serotype O:6 (strain 81116 / NCTC 11828), this protein is Uracil phosphoribosyltransferase.